A 252-amino-acid polypeptide reads, in one-letter code: Transmembrane ascorbate-dependent reductase CYB561 (252 aa).

Met1 is subject to N-acetylmethionine. Over 1–17 (MESPAGRTPAPGALPYY) the chain is Cytoplasmic. The chain crosses the membrane as a helical span at residues 18–38 (VAFSQLLGLTVVAVTGAWLGA). The region spanning 20-221 (FSQLLGLTVV…FGAVVLYILT (202 aa)) is the Cytochrome b561 domain. Topologically, residues 39–52 (YRGGIAWESALQFN) are vesicular. A helical transmembrane segment spans residues 53 to 73 (VHPLCMIIGLVFLQGDALLVY). The heme b site is built by His54, Arg74, and Lys81. At 74-85 (RVFRNEAKRTTK) the chain is on the cytoplasmic side. L-ascorbate is bound by residues Lys81 and Lys85. Residues 86–106 (ILHGLLHVLAFVIALVGLVAV) traverse the membrane as a helical segment. Heme b is bound by residues His88, 117–120 (DLYS), and His122. At 107–125 (FDYHRKKGIADLYSLHSWC) the chain is on the vesicular side. The helical transmembrane segment at 126–146 (GILVFVLFLAQWLVGLGFFLF) threads the bilayer. The Cytoplasmic portion of the chain corresponds to 147–159 (PGASFSLRSRYRP). L-ascorbate is bound at residue Arg154. Residues 160-180 (QHVFFGAAIFLLSVGTALLGL) form a helical membrane-spanning segment. Heme b contacts are provided by His161 and Glu182. The Vesicular segment spans residues 181–199 (KEALLFQLGTKYSAFESEG). Residues 200-220 (VLANVLGLLLVAFGAVVLYIL) traverse the membrane as a helical segment. Topologically, residues 221 to 252 (TRADWKRPLQAEEQALSMDFKTLTEGDSPSSQ) are cytoplasmic. Heme b is bound at residue Lys226. 2 positions are modified to phosphoserine: Ser248 and Ser250.

Heme b serves as cofactor.

The protein localises to the cytoplasmic vesicle. It localises to the secretory vesicle. Its subcellular location is the chromaffin granule membrane. The catalysed reaction is monodehydro-L-ascorbate radical(out) + L-ascorbate(in) = monodehydro-L-ascorbate radical(in) + L-ascorbate(out). In terms of biological role, transmembrane reductase that uses ascorbate as an electron donor in the cytoplasm and transfers electrons across membranes to reduce monodehydro-L-ascorbate radical in the lumen of secretory vesicles. It is therefore involved the regeneration and homeostasis within secretory vesicles of ascorbate which in turn provides reducing equivalents needed to support the activity of intravesicular enzymes. This is Transmembrane ascorbate-dependent reductase CYB561 (CYB561) from Sus scrofa (Pig).